The sequence spans 1197 residues: MQPWQCLRRFALAWWERTAEGRARSPREEVGPRDPGGRGEPDPERSSPPMLSADDAEYPREYRTLGGGGSGGSGGRRFSNVGLVHTSERRHTVIAAQSLEALSGLQKADADRKRDAFMDHLKSKYPQHALALRGQQDRMREQQPNYWSFKTRSSRHTQGAQPGLADQAAKLSYASAESLETMSEAELPLGFSRMNRFRQSLPLSRSASQTKLRSPGVLFLQFGEETRRVHITHEVSSLDTLHALIAHMFPQKLTMGMLKSPNTAILIKDEARNVFYELEDVRDIQDRSIIKIYRKEPLYAAFPGSHLTNGDLRREMVYASRESSPTRRLNNLSPASHLASSSPPPGLPSGLPSGLPSGSPSRSRLSYAGGRPPSYAGSPVHHAAERLGGAPTSQGVSPSPSAILERRDVKPDEDLAGKAGGMVLVKGEGLYADPYGLLHEGRLSLAAAAGDPFAYPGAGGLYKRGSVRSLSTYSAAALQSDLEDSLYKAGAGGPLYGDGYGFRLPPSSPQKLADVSAPSGGPPPPHSPYSGPPSRGSPVRQSFRKDSGSSSVFAESPGGKARSTGASTAGAPPSELFPGPGERSLVGFGPPVPAKDTETRERMEAMEKQIASLTGLVQSALLRGSEPETPSEKIEGSNGAATPSAPVCGSGSRSSGATPVSGPPPPAVSSTPAGQPTAVSRLQMQMHLRGLQNSASDLRGQLQQLRKLQLQNQESVRALLKRTEAELSMRVSEAARRQEDPLQRQRTLVEEERLRYLNDEELITQQLNDLEKSVEKIQRDVAHNHRLVPGPELEEKALVLKQLGETLTELKAHFPGLQSKMRVVLRVEVEAVKFLKEEPQRLDGLLKRCRVVTDTLAQIRRQVDEGVWPPPNNLLNQSPKKVAAETDFSKGLDFEIPPPSPPLNLHELSGPAEGTPLTPKSGNPTKGLDAPSKRNMDKAVSVEAAERDWEEKRAALTQYSAKDINRLLEETQAELLKAIPDLDCASKTHPGPTPTPDHKPPKAPHGQKAAPRTEPSGRRGSDELTVPRYRTEKPSKSPPPPPPRRSFPSSHGLTTTRTGEVVVTSKKDSVFIKKAESEELEIQKPQVKLRRAVSEVVRPASTPPIMASAIKDEDDEERIIAELESGGGSVPPMKVVTPGASRLKAAQGPAGSPDKGKHGKQRTEYMRIQAQQQVRVGYQAPRPLEGCTPRLCYMPLS.

The span at Ala-19–Arg-45 shows a compositional bias: basic and acidic residues. A disordered region spans residues Ala-19–Asn-80. Ser-47 and Ser-52 each carry phosphoserine. A compositionally biased stretch (gly residues) spans Leu-65–Gly-75. A Phosphoserine modification is found at Ser-79. Thr-86 bears the Phosphothreonine mark. A phosphoserine mark is found at Ser-87, Ser-98, Ser-178, Ser-200, Ser-204, Ser-214, and Ser-260. Tyr-276 is subject to Phosphotyrosine. Residues Ala-319 to Leu-415 are disordered. Positions Arg-321–Asn-331 are enriched in polar residues. A compositionally biased stretch (low complexity) spans Leu-332–Ser-341. Phosphoserine occurs at positions 333, 342, and 359. Positions Pro-348 to Ser-366 are enriched in low complexity. Omega-N-methylarginine occurs at positions 364 and 371. Phosphoserine is present on residues Ser-378, Ser-397, and Ser-399. Residues Pro-391–Pro-400 are compositionally biased toward polar residues. Residues Leu-404 to Leu-415 show a composition bias toward basic and acidic residues. Tyr-431 is modified (phosphotyrosine). The interval Gly-501–Pro-676 is disordered. A compositionally biased stretch (pro residues) spans Gly-520–Gly-531. Phosphoserine occurs at positions 527, 530, and 534. Arg-535 is subject to Omega-N-methylarginine. A phosphoserine mark is found at Ser-537, Ser-547, Ser-549, Ser-551, and Ser-556. A compositionally biased stretch (basic and acidic residues) spans Lys-595–Glu-607. Phosphoserine occurs at positions 631 and 655. Phosphothreonine occurs at positions 658 and 671. Residues Arg-681–Val-731 form an interaction with SNAP25 region. Coiled-coil stretches lie at residues Leu-688 to Leu-708 and Glu-760 to Asp-780. Phosphoserine is present on residues Ser-878 and Ser-900. 2 disordered regions span residues Gly-891–Trp-949 and Asp-983–Ser-1065. At Thr-918 the chain carries Phosphothreonine. Ser-1021 carries the post-translational modification Phosphoserine. Positions Lys-1036–Arg-1045 are enriched in pro residues. Ser-1077 and Ser-1094 each carry phosphoserine. The disordered stretch occupies residues Ser-1141–Thr-1163.

The protein belongs to the SRCIN1 family. In terms of assembly, interacts with BCAR1/p130Cas through its C-terminal domain and with CSK, CTTN and SRC. Also interacts with MAPRE3/EB3, SORBS3/vinexin and the N-terminal coiled-coil region of SNAP25. Post-translationally, tyrosine-phosphorylated in response to EGF and to cell adhesion to integrin ligands. In terms of tissue distribution, expressed exclusively in brain. Abundant in telencephalon and expressed moderately in cerebellum, hypothalamus, thalamus, superior and inferior colliculi, and olfactory bulb. No expression detected in medulla oblongata, spinal cord or pituitary gland. Enriched in the neuropil rather than soma in the thalamus, corpus striatum and cerebral cortex. Detected in astrocytes.

Its subcellular location is the cytoplasm. The protein localises to the cytoskeleton. It is found in the cell projection. It localises to the axon. The protein resides in the dendrite. Its subcellular location is the presynapse. The protein localises to the postsynapse. It is found in the postsynaptic density. Its function is as follows. Acts as a negative regulator of SRC by activating CSK which inhibits SRC activity and downstream signaling, leading to impaired cell spreading and migration. Regulates dendritic spine morphology. Involved in calcium-dependent exocytosis. May play a role in neurotransmitter release or synapse maintenance. In Rattus norvegicus (Rat), this protein is SRC kinase signaling inhibitor 1.